A 490-amino-acid polypeptide reads, in one-letter code: Pentatricopeptide repeat-containing protein At2g20710, mitochondrial (490 aa).

Residues 1–86 (MKHLLLLRLV…IKMLRKFSRF (86 aa)) constitute a mitochondrion transit peptide. PPR repeat units lie at residues 138-172 (NYHL…GFLK), 173-207 (GCLP…TVKP), 208-243 (DIFT…GLHL), 244-274 (DWRT…SEQM), 280-310 (RKHA…YKEL), 314-344 (YNTG…WEAG), 349-379 (DIRI…LVQK), and 384-421 (DTST…GWRP).

It belongs to the PPR family. P subfamily.

The protein resides in the mitochondrion. This Arabidopsis thaliana (Mouse-ear cress) protein is Pentatricopeptide repeat-containing protein At2g20710, mitochondrial.